The chain runs to 352 residues: GTPase Obg (352 aa).

The region spanning 1-159 (MHFLDQAKIY…MWVWLRLKLL (159 aa)) is the Obg domain. The region spanning 160–327 (ADVGLLGLPN…LLDAVLGYLP (168 aa)) is the OBG-type G domain. GTP contacts are provided by residues 166–173 (GLPNAGKS), 191–195 (FTTLV), 212–215 (DIPG), 279–282 (NKLD), and 308–310 (SGA). Residues Ser-173 and Thr-193 each contribute to the Mg(2+) site. The disordered stretch occupies residues 329–352 (STSTETKGSEVEEVDEEGGEWSPI). Acidic residues predominate over residues 339–352 (VEEVDEEGGEWSPI).

The protein belongs to the TRAFAC class OBG-HflX-like GTPase superfamily. OBG GTPase family. As to quaternary structure, monomer. Mg(2+) serves as cofactor.

The protein resides in the cytoplasm. Functionally, an essential GTPase which binds GTP, GDP and possibly (p)ppGpp with moderate affinity, with high nucleotide exchange rates and a fairly low GTP hydrolysis rate. Plays a role in control of the cell cycle, stress response, ribosome biogenesis and in those bacteria that undergo differentiation, in morphogenesis control. This chain is GTPase Obg, found in Erythrobacter litoralis (strain HTCC2594).